The following is a 246-amino-acid chain: Probable aquaporin AqpM (246 aa).

The Cytoplasmic segment spans residues 1-12 (MTMTLAKRFTAE). The chain crosses the membrane as a helical span at residues 13–33 (VVGTFILVFFGPGAAVITLMI). Topologically, residues 34-56 (ANGADKPNEFNIGIGALGGLGDW) are extracellular. A helical membrane pass occupies residues 57 to 77 (FAIGMAFALAIAAVIYSLGRI). Residues 78-104 (SGAHINPAVTIALWSIGRFPGREVVPY) lie on the Cytoplasmic side of the membrane. The NPA 1 motif lies at 83-85 (NPA). Residues 105 to 125 (IVAQFIGAALGSLLFLACVGP) form a helical membrane-spanning segment. Topologically, residues 126–146 (AAATVGGLGATAPFPGIGYGQ) are extracellular. A helical transmembrane segment spans residues 147 to 167 (AILTEAIGTFLLMLVIMGVAV). Over 168–173 (DERAPP) the chain is Cytoplasmic. A helical transmembrane segment spans residues 174–194 (GFAGLVIGLTVGGIITTIGNI). Residues 195-217 (TGSSLNPARTFGPYLGDSLMGIN) are Extracellular-facing. Positions 200–202 (NPA) match the NPA 2 motif. The chain crosses the membrane as a helical span at residues 218 to 238 (LWQYFPIYVIGPIVGAVAAAW). The Cytoplasmic portion of the chain corresponds to 239–246 (LYNYLAKE).

This sequence belongs to the MIP/aquaporin (TC 1.A.8) family.

It is found in the cell membrane. In terms of biological role, channel that permits osmotically driven movement of water in both directions. The polypeptide is Probable aquaporin AqpM (aqpM) (Archaeoglobus fulgidus (strain ATCC 49558 / DSM 4304 / JCM 9628 / NBRC 100126 / VC-16)).